Consider the following 191-residue polypeptide: Glycerol-3-phosphate acyltransferase (191 aa).

Helical transmembrane passes span 10-30, 57-77, 84-104, 118-138, and 158-178; these read LAFI…CISA, FGSV…FLAV, FAST…YMAF, FVLV…FFVL, and YALL…LIFI.

It belongs to the PlsY family. In terms of assembly, probably interacts with PlsX.

Its subcellular location is the cell inner membrane. The enzyme catalyses an acyl phosphate + sn-glycerol 3-phosphate = a 1-acyl-sn-glycero-3-phosphate + phosphate. The protein operates within lipid metabolism; phospholipid metabolism. Its function is as follows. Catalyzes the transfer of an acyl group from acyl-phosphate (acyl-PO(4)) to glycerol-3-phosphate (G3P) to form lysophosphatidic acid (LPA). This enzyme utilizes acyl-phosphate as fatty acyl donor, but not acyl-CoA or acyl-ACP. The polypeptide is Glycerol-3-phosphate acyltransferase (Neorickettsia sennetsu (strain ATCC VR-367 / Miyayama) (Ehrlichia sennetsu)).